Reading from the N-terminus, the 104-residue chain is Type VII secretion system extracellular protein B (104 aa).

This sequence belongs to the WXG100 family. In terms of assembly, homodimer. When mixed with EsxA does not form heterodimers. Forms heterodimers with EsxD.

Its subcellular location is the secreted. Virulence factor that is important for the establishment of infection in the host. EsxB is required for EsxA synthesis as well as secretion. Mediates together with EsxA the release of S.aureus from the host cell. Also inhibits host cytokine production and thus modulates dendritic cell-mediated immunity. This Staphylococcus aureus (strain USA300) protein is Type VII secretion system extracellular protein B.